The chain runs to 283 residues: Undecaprenyl-diphosphatase (283 aa).

Transmembrane regions (helical) follow at residues 47 to 67 (PGLS…IAYF), 94 to 114 (LGIA…CIKL), 127 to 147 (VPAI…AELL), 197 to 217 (AARF…LVEL), 227 to 247 (GGVL…WLAI), and 261 to 281 (IFVV…SGSA).

The protein belongs to the UppP family.

The protein localises to the cell inner membrane. It catalyses the reaction di-trans,octa-cis-undecaprenyl diphosphate + H2O = di-trans,octa-cis-undecaprenyl phosphate + phosphate + H(+). Its function is as follows. Catalyzes the dephosphorylation of undecaprenyl diphosphate (UPP). Confers resistance to bacitracin. This Synechococcus sp. (strain CC9311) protein is Undecaprenyl-diphosphatase.